We begin with the raw amino-acid sequence, 499 residues long: Glucooligosaccharide oxidase (499 aa).

The N-terminal stretch at 1 to 25 (MVRIQELTAALSLASVVQASWIQKR) is a signal peptide. A disulfide bond links Cys31 and Cys80. The 173-residue stretch at 58–230 (VDYDPAAIAI…SEFEFNTFEA (173 aa)) folds into the FAD-binding PCMH-type domain. Residues 95 to 155 (HSYGSYGFGG…GNRALSHGTC (61 aa)) constitute a cross-link (6-(S-cysteinyl)-8alpha-(pros-histidyl)-FAD (His-Cys)). Residues Tyr97, Thr154, and Arg270 each contribute to the substrate site. N-linked (GlcNAc...) asparagine glycans are attached at residues Asn330 and Asn366. Substrate contacts are provided by Gln378 and Gln409. An N-linked (GlcNAc...) asparagine glycan is attached at Asn419. Residue Tyr454 participates in substrate binding. The active-site Proton acceptor is the Tyr454.

Belongs to the oxygen-dependent FAD-linked oxidoreductase family. Requires FAD as cofactor. The FAD cofactor is bound via a bicovalent 6-S-cysteinyl, 8alpha-N1-histidyl FAD linkage.

The protein resides in the secreted. The catalysed reaction is beta-lactose + O2 = lactobiono-1,5-lactone + H2O2. It carries out the reaction D-cellobiose + O2 = D-cellobiono-1,5-lactone + H2O2. It catalyses the reaction D-cellotriose + O2 = D-cellotriono-1,5-lactone + H2O2. The enzyme catalyses D-cellotetraose + O2 = D-cellotetraono-1,5-lactone + H2O2. The catalysed reaction is D-cellopentaose + O2 = D-cellopentaono-1,5-lactone + H2O2. It carries out the reaction D-cellohexaose + O2 = D-cellohexaono-1,5-lactone + H2O2. Its function is as follows. Catalyzes the selective oxidation of C1 hydroxyl moieties on mono- and disaccharides with concomitant reduction of molecular oxygen to hydrogen peroxide. This results in the formation of the corresponding lactones, which typically undergo spontaneous hydrolysis. Glucooligosaccharide oxidase is able to oxidize the monosaccharide D-glucose as well as the disaccharides maltose, cellobiose, and lactose. In addition, it shows high selectivity for cello- and maltooligosaccharides, indicating that glucooligosaccharide oxidase prefers oligosaccharides with a beta-D-glucosyl unit on the reducing end and additional sugar units linked by alpha- or beta-1,4 glucosidic bonds. The polypeptide is Glucooligosaccharide oxidase (gluO) (Sarocladium strictum (Black bundle disease fungus)).